The primary structure comprises 161 residues: Cyclic pyranopterin monophosphate synthase (161 aa).

Residues 75–77 and 113–114 contribute to the substrate site; these read LCH and ME. Asp-128 is an active-site residue.

It belongs to the MoaC family. In terms of assembly, homohexamer; trimer of dimers.

It catalyses the reaction (8S)-3',8-cyclo-7,8-dihydroguanosine 5'-triphosphate = cyclic pyranopterin phosphate + diphosphate. It functions in the pathway cofactor biosynthesis; molybdopterin biosynthesis. In terms of biological role, catalyzes the conversion of (8S)-3',8-cyclo-7,8-dihydroguanosine 5'-triphosphate to cyclic pyranopterin monophosphate (cPMP). The chain is Cyclic pyranopterin monophosphate synthase from Edwardsiella ictaluri (strain 93-146).